The sequence spans 299 residues: 4-hydroxy-tetrahydrodipicolinate synthase (299 aa).

Threonine 51 lines the pyruvate pocket. Tyrosine 139 (proton donor/acceptor) is an active-site residue. Lysine 167 (schiff-base intermediate with substrate) is an active-site residue. Position 209 (isoleucine 209) interacts with pyruvate.

Belongs to the DapA family. Homotetramer; dimer of dimers.

It localises to the cytoplasm. The catalysed reaction is L-aspartate 4-semialdehyde + pyruvate = (2S,4S)-4-hydroxy-2,3,4,5-tetrahydrodipicolinate + H2O + H(+). The protein operates within amino-acid biosynthesis; L-lysine biosynthesis via DAP pathway; (S)-tetrahydrodipicolinate from L-aspartate: step 3/4. Functionally, catalyzes the condensation of (S)-aspartate-beta-semialdehyde [(S)-ASA] and pyruvate to 4-hydroxy-tetrahydrodipicolinate (HTPA). This Methylobacterium radiotolerans (strain ATCC 27329 / DSM 1819 / JCM 2831 / NBRC 15690 / NCIMB 10815 / 0-1) protein is 4-hydroxy-tetrahydrodipicolinate synthase.